The primary structure comprises 167 residues: Transmembrane protein 229B (167 aa).

The Cytoplasmic portion of the chain corresponds to 1–14; it reads MASAEPLTALSRWY. A helical membrane pass occupies residues 15–35; the sequence is LYAIHGYFCEVMFTAAWEFVV. Over 36-40 the chain is Extracellular; the sequence is NFNWK. The helical transmembrane segment at 41–61 threads the bilayer; sequence FPGVTSVWALFIYGTSILIVE. Topologically, residues 62–73 are cytoplasmic; it reads RMYLRLRGRCPL. Residues 74 to 94 form a helical membrane-spanning segment; the sequence is LVRCVIYTLWTYLWEFTTGFI. Over 95–109 the chain is Extracellular; that stretch reads LRQFNACPWDYSQFD. A helical transmembrane segment spans residues 110-130; the sequence is FDFMGLITLEYAVPWFCGALI. Over 131–167 the chain is Cytoplasmic; sequence MEQFIIRNTLRLRFDKDAEPGEPASPPALANGHVKTD. Positions 148–167 are disordered; sequence AEPGEPASPPALANGHVKTD.

It belongs to the TMEM229 family.

It is found in the membrane. In Mus musculus (Mouse), this protein is Transmembrane protein 229B (TMEM229B).